Here is a 243-residue protein sequence, read N- to C-terminus: UPF0246 protein SpyM3_1790 (243 aa).

The protein belongs to the UPF0246 family.

The protein is UPF0246 protein SpyM3_1790 of Streptococcus pyogenes serotype M3 (strain ATCC BAA-595 / MGAS315).